The chain runs to 282 residues: Pantothenate synthetase (282 aa).

30-37 (MGYLHEGH) lines the ATP pocket. Histidine 37 acts as the Proton donor in catalysis. Residue glutamine 61 participates in (R)-pantoate binding. A beta-alanine-binding site is contributed by glutamine 61. 147 to 150 (GMKD) contacts ATP. Glutamine 153 is a binding site for (R)-pantoate. ATP is bound by residues valine 176 and 184 to 187 (KSSR).

This sequence belongs to the pantothenate synthetase family. In terms of assembly, homodimer.

It is found in the cytoplasm. It catalyses the reaction (R)-pantoate + beta-alanine + ATP = (R)-pantothenate + AMP + diphosphate + H(+). It functions in the pathway cofactor biosynthesis; (R)-pantothenate biosynthesis; (R)-pantothenate from (R)-pantoate and beta-alanine: step 1/1. Functionally, catalyzes the condensation of pantoate with beta-alanine in an ATP-dependent reaction via a pantoyl-adenylate intermediate. The polypeptide is Pantothenate synthetase (Bacillus cereus (strain AH187)).